A 556-amino-acid polypeptide reads, in one-letter code: Formate--tetrahydrofolate ligase 2 (556 aa).

Residue 65 to 72 (TPAGEGKS) participates in ATP binding.

Belongs to the formate--tetrahydrofolate ligase family.

It carries out the reaction (6S)-5,6,7,8-tetrahydrofolate + formate + ATP = (6R)-10-formyltetrahydrofolate + ADP + phosphate. It functions in the pathway one-carbon metabolism; tetrahydrofolate interconversion. The protein is Formate--tetrahydrofolate ligase 2 of Streptococcus sanguinis (strain SK36).